Here is a 278-residue protein sequence, read N- to C-terminus: NAD-capped RNA hydrolase NudC (278 aa).

Arg84 is a substrate binding site. 2 residues coordinate Zn(2+): Cys114 and Cys117. Substrate is bound at residue Glu127. Cys132 provides a ligand contact to Zn(2+). Substrate is bound at residue Tyr140. Residues 141–264 enclose the Nudix hydrolase domain; it reads PRISPSMIVL…SIARYLIEAY (124 aa). Ala174, Glu190, and Glu194 together coordinate a divalent metal cation. Positions 175–196 match the Nudix box motif; sequence GFVEPGESAEDCVHREVMEEVQ. 208-215 contacts substrate; that stretch reads QCWPFPHS. Glu235 contributes to the a divalent metal cation binding site. Ala257 lines the substrate pocket.

The protein belongs to the Nudix hydrolase family. NudC subfamily. Homodimer. Requires Mg(2+) as cofactor. It depends on Mn(2+) as a cofactor. The cofactor is Zn(2+).

It catalyses the reaction a 5'-end NAD(+)-phospho-ribonucleoside in mRNA + H2O = a 5'-end phospho-adenosine-phospho-ribonucleoside in mRNA + beta-nicotinamide D-ribonucleotide + 2 H(+). The enzyme catalyses NAD(+) + H2O = beta-nicotinamide D-ribonucleotide + AMP + 2 H(+). The catalysed reaction is NADH + H2O = reduced beta-nicotinamide D-ribonucleotide + AMP + 2 H(+). Functionally, mRNA decapping enzyme that specifically removes the nicotinamide adenine dinucleotide (NAD) cap from a subset of mRNAs by hydrolyzing the diphosphate linkage to produce nicotinamide mononucleotide (NMN) and 5' monophosphate mRNA. The NAD-cap is present at the 5'-end of some mRNAs and stabilizes RNA against 5'-processing. Has preference for mRNAs with a 5'-end purine. Catalyzes the hydrolysis of a broad range of dinucleotide pyrophosphates. The chain is NAD-capped RNA hydrolase NudC from Pseudomonas syringae pv. syringae (strain B728a).